The sequence spans 178 residues: Female-specific protein transformer (178 aa).

Basic and acidic residues-rich tracts occupy residues Met-1–Gly-18 and Arg-25–Lys-40. The tract at residues Met-1–Ile-117 is disordered. Basic residues-rich tracts occupy residues Arg-59–Ala-73 and Arg-81–Arg-108.

It localises to the nucleus speckle. Functionally, member of the regulatory pathway controlling female somatic sexual differentiation, regulated by Sxl. Activates dsx female-specific splicing by promoting the formation of a splicing enhancer complex which consists of tra, tra2 and sr proteins. The chain is Female-specific protein transformer (tra) from Drosophila erecta (Fruit fly).